The sequence spans 551 residues: Arginine--tRNA ligase (551 aa).

Positions 123–133 (ANPTGPLTIGR) match the 'HIGH' region motif.

It belongs to the class-I aminoacyl-tRNA synthetase family. As to quaternary structure, monomer.

The protein resides in the cytoplasm. It catalyses the reaction tRNA(Arg) + L-arginine + ATP = L-arginyl-tRNA(Arg) + AMP + diphosphate. This is Arginine--tRNA ligase from Chlorobium phaeobacteroides (strain DSM 266 / SMG 266 / 2430).